We begin with the raw amino-acid sequence, 503 residues long: MDTLLRTHNRLELLYPLHELAKRHFLSPSPNPQNPNFKFFSRKPYQKKCRNGYIGVSSNQLLDLVPEIKKEHLEFDLPLYDPSKALTLDLAVVGGGPLARSCSTSLGGGLSVVSIDPNPKLIWPNNYGVWVDEFEDMDLLDCLDATWSGAIVYVDDRSTKNLSRPYARVNRKNLKSKMMKKCVSNGVRFHQATVVKAMHEEEKSYLICSDGVTIDARVVLDATGFSRCLVQYDKPYNPGYQVAYGILAEVEEHPFDVDKMVFMDWRDSHLNGKAELNERNAKIPTFLYAMPFSSNRIFLEETSLVARPGLKMEDIQERMVARLNHLGIRIKSIEEDERCVIPMGGPLPVIPQRVVGIGGTAGMVHPSTGYMVARTLAAAPIVANSIVQYLVSDSGLSGNDLSADVWKDLWPIERRRQREFFCFGMDILLKLDLEGTRRFFDAFFDLEPRYWHGFLSSRLFLPELVPFGLSLFSHASNTCKLEIMAKGTLPLVNMINNLVQDRD.

Residues M1–A85 constitute a chloroplast and chromoplast transit peptide. L90–P117 provides a ligand contact to NAD(+).

It belongs to the lycopene cyclase family.

The protein localises to the plastid. The protein resides in the chloroplast. Its subcellular location is the chromoplast. It localises to the chromoplast membrane. It is found in the chloroplast membrane. The enzyme catalyses a carotenoid psi-end group = a carotenoid beta-end derivative. The protein operates within carotenoid biosynthesis; beta-carotene biosynthesis. Its pathway is carotenoid biosynthesis; beta-zeacarotene biosynthesis. Its function is as follows. Catalyzes the double cyclization reaction which converts lycopene to beta-carotene and neurosporene to beta-zeacarotene. This Narcissus pseudonarcissus (Daffodil) protein is Lycopene beta cyclase, chloroplastic/chromoplastic (LCY1).